Reading from the N-terminus, the 394-residue chain is MSGPSRTQRPMSPLRAFFHHETSAGLVLMACALAAIAVANSPLAPGYFATLHAYAGPLSVQHWVNDGLMAVFFLLVGLEIKREILTGQLATWGKRTLPGVAAVGGMAIPGIVYVMLNLNNPDALRGWAIPAATDIAFALGVMSLLGSRVPSSLKIFLAALAIIDDLGAVIIIAIFYTANINVATLLGAVFVFGILRSLCAANFQDLRIYLALGAVLWVLLLVSGVHATLAGVLLALTIPITTASATPDPSRQTAPLHRLESLLHAPVAFAILPIFGFANAGVSFASITPAIMTDTLAVGVAAGLLIGKVVGIFGAVALMVRLRLAELPTHATWLQVLGVAFLCGIGFTMSLFIGLLAFEDPHMQDRVKYGILAGSLLAGVLGYGILRIAGRRAL.

The next 11 membrane-spanning stretches (helical) occupy residues 24–44 (AGLV…SPLA), 58–78 (LSVQ…LVGL), 96–116 (TLPG…YVML), 126–146 (GWAI…SLLG), 155–175 (IFLA…IAIF), 180–200 (INVA…SLCA), 214–234 (AVLW…GVLL), 267–287 (VAFA…FASI), 300–320 (VAAG…ALMV), 336–356 (VLGV…IGLL), and 370–390 (GILA…RIAG).

The protein belongs to the NhaA Na(+)/H(+) (TC 2.A.33) antiporter family.

The protein localises to the cell inner membrane. It carries out the reaction Na(+)(in) + 2 H(+)(out) = Na(+)(out) + 2 H(+)(in). Na(+)/H(+) antiporter that extrudes sodium in exchange for external protons. The protein is Na(+)/H(+) antiporter NhaA of Azorhizobium caulinodans (strain ATCC 43989 / DSM 5975 / JCM 20966 / LMG 6465 / NBRC 14845 / NCIMB 13405 / ORS 571).